The following is a 216-amino-acid chain: Probable csgAB operon transcriptional regulatory protein (216 aa).

The 66-residue stretch at 149-214 folds into the HTH luxR-type domain; it reads NSTESALLTH…QAVSWANDNL (66 aa). The H-T-H motif DNA-binding region spans 173–192; that stretch reads NNEIARSLFISENTVKTHLY.

Its function is as follows. The master regulator for adhesive curli fimbriae expression; necessary for transcription of the csgAB operon. Plays a positive role in biofilm formation. This chain is Probable csgAB operon transcriptional regulatory protein, found in Salmonella typhimurium (strain LT2 / SGSC1412 / ATCC 700720).